A 46-amino-acid chain; its full sequence is Protein PsbN (46 aa).

A helical membrane pass occupies residues 10-30 (VAIAVLAALLGLTGFGVYTAF).

This sequence belongs to the PsbN family.

It is found in the cellular thylakoid membrane. Functionally, may play a role in photosystem I and II biogenesis. This chain is Protein PsbN, found in Synechococcus sp. (strain CC9311).